Reading from the N-terminus, the 90-residue chain is Large ribosomal subunit protein bL27 (90 aa).

The segment at 1-22 (MAHKKSGGSSSNGRDSAGRRLG) is disordered.

Belongs to the bacterial ribosomal protein bL27 family.

The protein is Large ribosomal subunit protein bL27 of Caulobacter sp. (strain K31).